Consider the following 1208-residue polypeptide: E3 ubiquitin-protein ligase DZIP3 (1208 aa).

Positions 10–29 (VRHPAVEDQRKEETENKLEK) are enriched in basic and acidic residues. 2 disordered regions span residues 10–38 (VRHP…NKQE) and 637–698 (GTSI…PHSV). Coiled-coil stretches lie at residues 14–43 (AVED…DIPT), 647–676 (ESLK…SKED), 792–853 (IASL…SKLN), and 904–939 (QLKA…KVKQ). The span at 637–647 (GTSIPSESSTE) shows a compositional bias: polar residues. Residues 648-657 (SLKDLQEVKS) are compositionally biased toward basic and acidic residues. Positions 658–669 (KQRKKKKTKNKK) are enriched in basic residues. Residues 670-693 (NKDSKEDQVPYVVEKEEQLRKEQA) are compositionally biased toward basic and acidic residues. The segment at 1088-1145 (KSQSQGKSVSNVNCVSPSHSPSQPDAAQPPKPAWRPLTSQGPATWEGASNPDEEEEEE) is disordered. Positions 1089–1112 (SQSQGKSVSNVNCVSPSHSPSQPD) are enriched in polar residues. An RING-type; atypical zinc finger spans residues 1148 to 1188 (CVICHENLSPENLSVLPCAHKFHAQCIRPWLMQQGTCPTCR).

As to quaternary structure, interacts with DAZ proteins. Widely expressed at low level. Highly expressed in skeletal muscle, kidney and heart. Expressed at low level in placenta, lung, brain, liver and pancreas.

The protein resides in the cytoplasm. It catalyses the reaction S-ubiquitinyl-[E2 ubiquitin-conjugating enzyme]-L-cysteine + [acceptor protein]-L-lysine = [E2 ubiquitin-conjugating enzyme]-L-cysteine + N(6)-ubiquitinyl-[acceptor protein]-L-lysine.. It functions in the pathway protein modification; protein ubiquitination. In terms of biological role, E3 Ubiquitin ligase proteins mediate ubiquitination and subsequent proteasomal degradation of target proteins. E3 ubiquitin ligases accept ubiquitin from an E2 ubiquitin-conjugating enzyme in the form of a thioester and then directly transfers the ubiquitin to targeted substrates. Able to specifically bind RNA. The chain is E3 ubiquitin-protein ligase DZIP3 (DZIP3) from Homo sapiens (Human).